The sequence spans 215 residues: Autophagy-related protein 101 (215 aa).

The interval 124 to 147 (PVGKSHHSKLVMDPGEASEERSSR) is disordered.

The protein belongs to the ATG101 family. Interacts with ATG11 and ATG13A.

Its subcellular location is the cytoplasmic vesicle. It localises to the autophagosome. Its function is as follows. Accessory protein involved in autophagy. Acts as a scaffold protein of the ATG1-ATG13 complex for faithful delivery of autophagic vesicles to the vacuole. Required for selective mitophagy. The protein is Autophagy-related protein 101 of Arabidopsis thaliana (Mouse-ear cress).